The primary structure comprises 235 residues: tRNA (guanine-N(1)-)-methyltransferase (235 aa).

S-adenosyl-L-methionine is bound by residues Gly-114 and 134–139 (IGDYIL).

It belongs to the RNA methyltransferase TrmD family. Homodimer.

It is found in the cytoplasm. The enzyme catalyses guanosine(37) in tRNA + S-adenosyl-L-methionine = N(1)-methylguanosine(37) in tRNA + S-adenosyl-L-homocysteine + H(+). Its function is as follows. Specifically methylates guanosine-37 in various tRNAs. The sequence is that of tRNA (guanine-N(1)-)-methyltransferase from Ehrlichia ruminantium (strain Welgevonden).